The chain runs to 82 residues: Small ribosomal subunit protein bS18 (82 aa).

Residues 1–20 are disordered; sequence MAEVSSSTVRRPFHRRRKTC.

The protein belongs to the bacterial ribosomal protein bS18 family. In terms of assembly, part of the 30S ribosomal subunit. Forms a tight heterodimer with protein bS6.

Binds as a heterodimer with protein bS6 to the central domain of the 16S rRNA, where it helps stabilize the platform of the 30S subunit. This chain is Small ribosomal subunit protein bS18, found in Allorhizobium ampelinum (strain ATCC BAA-846 / DSM 112012 / S4) (Agrobacterium vitis (strain S4)).